A 495-amino-acid chain; its full sequence is E3 ubiquitin-protein ligase RAD18 (495 aa).

At M1 the chain carries N-acetylmethionine. An RING-type zinc finger spans residues 25–64 (CGICFEYFNIAMIIPQCSHNYCSLCIRKFLSYKTQCPTCC). S99 and S103 each carry phosphoserine. A Phosphothreonine modification is found at T118. Residues S122, S125, S142, S158, and S164 each carry the phosphoserine modification. The disordered stretch occupies residues 152–197 (ENKSKFSPQKEASPAAKTKETRSVEEIAPDPSEAKRPEPPSTSTLK). The UBZ4-type zinc finger occupies 201-228 (KVDCPVCGVNIPESHINKHLDSCLSREE). Zn(2+) contacts are provided by C204, C207, H219, and C223. An LR motif motif is present at residues 232–240 (SLRSSVHKR). Residues 248-282 (YNLLSDRDLKKKLKEHGLSIQGNKQQLIKRHQEFV) form the SAP domain. S322 is modified (phosphoserine). K376 participates in a covalent cross-link: Glycyl lysine isopeptide (Lys-Gly) (interchain with G-Cter in SUMO2). 2 disordered regions span residues 400 to 423 (NHFS…DSSS) and 456 to 495 (AWEA…RNRN). The segment covering 410 to 421 (PEELEPDREEDS) has biased composition (acidic residues). S471 and S483 each carry phosphoserine. Basic and acidic residues predominate over residues 479–495 (RAAESAEIEPRNKRNRN).

Belongs to the RAD18 family. In terms of assembly, homodimer. Interacts with UBE2A and UBE2B, one homodimer binding one molecule of UBE2B. Interacts with SHPRH. Interacts with HLTF. Interacts with SPRTN; leading to enhance chromatin association of RAD18 and RAD18-mediated PCNA ubiquitination and translesion DNA synthesis. Interacts (via C-terminus and phosphorylated form) with SLF1 (via BRCT domains); this interaction is required for efficient repair of UV-induced DNA damage. Interacts with SLF2. Interacts with SMC5; this interaction is increased in a SLF1 or SLF2-dependent manner. Interacts with DNA damage up-regulated protein DDUP. Forms a complex with DDUP and H2AX following DDUP phosphorylation.

It is found in the nucleus. The protein resides in the cytoplasm. The protein localises to the cytoskeleton. It localises to the microtubule organizing center. Its subcellular location is the centrosome. The catalysed reaction is S-ubiquitinyl-[E2 ubiquitin-conjugating enzyme]-L-cysteine + [acceptor protein]-L-lysine = [E2 ubiquitin-conjugating enzyme]-L-cysteine + N(6)-ubiquitinyl-[acceptor protein]-L-lysine.. The protein operates within protein modification; protein ubiquitination. Its function is as follows. E3 ubiquitin-protein ligase involved in postreplication repair of UV-damaged DNA. Postreplication repair functions in gap-filling of a daughter strand on replication of damaged DNA. Associates to the E2 ubiquitin conjugating enzyme UBE2B to form the UBE2B-RAD18 ubiquitin ligase complex involved in mono-ubiquitination of DNA-associated PCNA on 'Lys-164'. Has ssDNA binding activity. This is E3 ubiquitin-protein ligase RAD18 (RAD18) from Homo sapiens (Human).